A 417-amino-acid chain; its full sequence is MSLSKKLTLDKVDLKGKRVIMRVDFNVPMKNKEITNNQRIKAALPSINYCLDNGAKSVVLMSHLGRPDGVPMPDKYSLEPVAAELKSLLGKDVLFLKDCVGPEVEQACANPPNGSIILLENLRFHVEEEGKGKDASGNKIKAEPAKMEAFQASLSKLGDVYVNDAFGTAHRAHSSMVGVNLPQKACGFLMKKELTYFAKALDSPERPFLAILGGAKVADKIQLINNMLDKVNEMIIGGGMGFTFLKVLNNMEIGTSLFDEEGAKIVKDLMAKAEKNGVKITLPVDFVTADKFDENAKTGQATLASGIPAGWMGLDCGPKSSKKYVEVVTWAKQIVWNGPVGVFEWEEFARGTKELMNNVVEATKRGCITIIGGGDTATCCAKWNTEDKVSHVSTGGGASLELLEGKVLPGVSTLNNV.

An N-acetylserine modification is found at serine 2. Phosphoserine is present on residues serine 2 and serine 4. The residue at position 6 (lysine 6) is an N6-succinyllysine. Position 11 is an N6-acetyllysine (lysine 11). The (2R)-3-phosphoglycerate site is built by valine 23, aspartate 24, phenylalanine 25, asparagine 26, glutamine 38, arginine 39, serine 62, histidine 63, glycine 65, and arginine 66. A mitochondrial targeting region exposed following cis-trans isomerization by PIN1 and recognized by the TOM complex for mitochondrial translocation of the protein region spans residues 38–43 (QRIKAA). Lysine 75 carries the N6-acetyllysine modification. Phosphotyrosine is present on tyrosine 76. An N6-acetyllysine mark is found at lysine 86 and lysine 91. Lysine 97 bears the N6-(2-hydroxyisobutyryl)lysine; alternate mark. Lysine 97 carries the N6-acetyllysine; alternate modification. (2R)-3-phosphoglycerate contacts are provided by leucine 122 and arginine 123. The residue at position 131 (lysine 131) is an N6-acetyllysine; alternate. Lysine 131 is subject to N6-malonyllysine; alternate. Lysine 146 is modified (N6-acetyllysine). Residues histidine 170 and arginine 171 each contribute to the (2R)-3-phosphoglycerate site. Residue lysine 191 is modified to N6-succinyllysine. Phosphotyrosine is present on tyrosine 196. Lysine 199 carries the N6-acetyllysine modification. At serine 203 the chain carries Phosphoserine. Glycine 214 lines the ADP pocket. Residue glycine 214 participates in CDP binding. AMP-binding residues include alanine 215 and lysine 216. Residue alanine 215 coordinates ATP. Alanine 215 provides a ligand contact to Mg(2+). Lysine 216 bears the N6-(2-hydroxyisobutyryl)lysine mark. Alanine 218 and aspartate 219 together coordinate Mg(2+). Aspartate 219 serves as a coordination point for CDP. Lysine 220 provides a ligand contact to AMP. An ATP-binding site is contributed by lysine 220. Residue lysine 220 is modified to N6-(2-hydroxyisobutyryl)lysine. Glycine 238 contributes to the ADP binding site. A CDP-binding site is contributed by glycine 238. Residue glycine 239 participates in AMP binding. Glycine 239 provides a ligand contact to ATP. Lysine 267 and lysine 291 each carry N6-acetyllysine. Glycine 313 is a binding site for AMP. Glycine 313 serves as a coordination point for ATP. Lysine 323 carries the post-translational modification N6-(2-hydroxyisobutyryl)lysine. 3 residues coordinate CDP: glycine 338, valine 340, and phenylalanine 343. Phenylalanine 343 contributes to the ADP binding site. An AMP-binding site is contributed by glutamate 344. 3 residues coordinate ATP: glutamate 344, aspartate 375, and threonine 376. Residue aspartate 375 participates in Mg(2+) binding.

It belongs to the phosphoglycerate kinase family. As to quaternary structure, monomer. Interacts with kinase MAPK1/ERK2; the interaction is direct, occurs under hypoxic conditions, and promotes its interaction with PIN1. Interacts with peptidyl-prolyl cis-trans isomerase PIN1; the interaction is direct, occurs under hypoxic conditions, and targets the protein to the mitochondrion by promoting interactions with the TOM complex. Interacts with mitochondrial circRNA mcPGK1 (via its 2nd stem-loop); the interaction is direct and targets the protein to the mitochondrion by promoting interactions with the TOM complex. Interacts with pyruvate dehydrogenase kinase PDK1; the interaction is direct, occurs under hypoxic conditions and leads to PDK1-mediated inhibition of pyruvate dehydrogenase complex activity. Requires Mg(2+) as cofactor. Phosphorylated at Ser-203 by MAPK1/ERK2 under hypoxic conditions, which promotes its mitochondrial targeting.

It localises to the cytoplasm. The protein resides in the cytosol. Its subcellular location is the mitochondrion matrix. It catalyses the reaction (2R)-3-phosphoglycerate + ATP = (2R)-3-phospho-glyceroyl phosphate + ADP. It carries out the reaction L-seryl-[protein] + ATP = O-phospho-L-seryl-[protein] + ADP + H(+). It participates in carbohydrate degradation; glycolysis; pyruvate from D-glyceraldehyde 3-phosphate: step 2/5. Catalyzes one of the two ATP producing reactions in the glycolytic pathway via the reversible conversion of 1,3-diphosphoglycerate to 3-phosphoglycerate. Both L- and D- forms of purine and pyrimidine nucleotides can be used as substrates, but the activity is much lower on pyrimidines. In addition to its role as a glycolytic enzyme, it seems that PGK-1 acts as a polymerase alpha cofactor protein (primer recognition protein). Acts as a protein kinase when localized to the mitochondrion where it phosphorylates pyruvate dehydrogenase kinase PDK1 to inhibit pyruvate dehydrogenase complex activity and suppress the formation of acetyl-coenzyme A from pyruvate, and consequently inhibit oxidative phosphorylation and promote glycolysis. May play a role in sperm motility. In Notamacropus eugenii (Tammar wallaby), this protein is Phosphoglycerate kinase 1 (PGK1).